We begin with the raw amino-acid sequence, 311 residues long: MEPIGRSLQGVTGRPDFQKRLEQMKEKVMKDQDVQAFLKENEEVIDQKMIEKSLNKLYEYIEQSKNCSYCSEDENCNNLLEGYHPKLVVNGRSIDIEYYECPVKRKLDQQKKQQSLMKSMYIQQDLLGATFQQVDISDPSRLAMFQHVTDFLKSYNETGKGKGLYLYGKFGVGKTFMLAAIANELAEKEYSSMIVYVPEFVRELKNSLQDQTLEEKLNMVKTTPVLMLDDIGAESMTSWVRDEVIGTVLQHRMSQQLPTFFSSNFSPDELKHHFTYSQRGEKEEVKAARLMERILYLAAPIRLDGENRRHP.

The interval 1–136 (MEPIGRSLQG…LGATFQQVDI (136 aa)) is N-terminal domain (Nd). Residues cysteine 67, cysteine 70, histidine 84, and cysteine 101 each contribute to the Zn(2+) site. Positions 137–311 (SDPSRLAMFQ…RLDGENRRHP (175 aa)) are C-terminal domain (Cd). Residue 168–175 (GKFGVGKT) participates in ATP binding.

The protein belongs to the DnaI family. The DNA replisome assembles sequentially on oriC in this order; DnaA, DnaD, DnaB, DnaI-DnaC helicase. Monomer with a very minor amount of dimer in solution. Interacts with replicative helicase (from G.stearothermophilus, called DnaB); this interaction is disrupted by DnaD. Interacts with replicative helicase DnaC, forms a DnaC(6):DnaI(6) complex. Interacts with the helicase as 3 dimers. A stable complex with DnaG primase, DnaI(6):helicase(6):DnaG(3) fragment can be isolated; DnaI and DnaG do not contact each other (helicase and DnaG in this complex are derived from G.stearothermophilus). Requires Zn(2+) as cofactor.

Its subcellular location is the cytoplasm. The catalysed reaction is ATP + H2O = ADP + phosphate + H(+). Functionally, helps load the DnaC replicative helicase onto single-stranded (ss)DNA and simulates the helicase activity; in the presence of DnaB more helicase activity is seen. Regulates DnaC helicase activity, at low concentrations stimulates the DNA helicase and ATPase activities of DnaC. Has no measurable ATPase activity after 1 hour incubation of 6 uM DnaI with or without DNA. Another group has found the protein has weak ATPase activity that is not stimulated by ssDNA. Whole protein binds forked DNA (but not ssDNA) weakly; ATP and ADPNP (probably 5'-adenylyl beta, gamma-imidodiphosphate) have no effect on DNA binding. DnaB, DnaD and DnaI may be required for a PriA-independent pathway of replication fork restart. This is Replicative helicase loader DnaI from Bacillus subtilis (strain 168).